We begin with the raw amino-acid sequence, 337 residues long: tRNA N6-adenosine threonylcarbamoyltransferase (337 aa).

Fe cation is bound by residues histidine 111 and histidine 115. Substrate-binding positions include 134–138, aspartate 167, glycine 180, and asparagine 272; that span reads LVSGG. Aspartate 300 lines the Fe cation pocket.

The protein belongs to the KAE1 / TsaD family. It depends on Fe(2+) as a cofactor.

It localises to the cytoplasm. The catalysed reaction is L-threonylcarbamoyladenylate + adenosine(37) in tRNA = N(6)-L-threonylcarbamoyladenosine(37) in tRNA + AMP + H(+). In terms of biological role, required for the formation of a threonylcarbamoyl group on adenosine at position 37 (t(6)A37) in tRNAs that read codons beginning with adenine. Is involved in the transfer of the threonylcarbamoyl moiety of threonylcarbamoyl-AMP (TC-AMP) to the N6 group of A37, together with TsaE and TsaB. TsaD likely plays a direct catalytic role in this reaction. The protein is tRNA N6-adenosine threonylcarbamoyltransferase of Shewanella woodyi (strain ATCC 51908 / MS32).